Reading from the N-terminus, the 300-residue chain is UPF0761 membrane protein PSHAa0171 (300 aa).

Transmembrane regions (helical) follow at residues 47-67 (LLSL…FPGF), 100-120 (NANQ…LLLI), 143-163 (FAVY…SIAV), 181-201 (FSGF…FIML), 215-235 (AIPG…GFAL), and 249-269 (AVAT…VVLL).

This sequence belongs to the UPF0761 family.

Its subcellular location is the cell inner membrane. This is UPF0761 membrane protein PSHAa0171 from Pseudoalteromonas translucida (strain TAC 125).